The primary structure comprises 66 residues: Large ribosomal subunit protein bL33 (66 aa).

It belongs to the bacterial ribosomal protein bL33 family.

The polypeptide is Large ribosomal subunit protein bL33 (Synechococcus sp. (strain CC9311)).